The primary structure comprises 201 residues: E3 ubiquitin-protein ligase MIR1 (201 aa).

Residues 1–58 form an RING-CH-type zinc finger; sequence MDSTGEFCWICHQPEGPLKRFCGCKGSCAVSHQDCLRGWLETSRRQTCALCGTPYSMK. At 1–81 the chain is on the cytoplasmic side; that stretch reads MDSTGEFCWI…EEVLAAMEAC (81 aa). Zn(2+)-binding residues include Cys-8, Cys-11, Cys-22, Cys-24, His-32, Cys-35, Cys-48, and Cys-51. The tract at residues 52–79 is DIRT; that stretch reads GTPYSMKWKTKPLREWTWGEEEVLAAME. The helical transmembrane segment at 82–102 threads the bilayer; that stretch reads LPLVLIPLAVLMIVMGTWLLV. Residues 103–113 lie on the Extracellular side of the membrane; the sequence is NHNGFLSPRMQ. Residues 114 to 134 traverse the membrane as a helical segment; sequence VVLVVIVLLAMIVFSASASYV. The Cytoplasmic portion of the chain corresponds to 135–201; sequence MVEGPGCLDT…RLGCVRLCCV (67 aa).

As to quaternary structure, interacts with host UBE2J2.

The protein localises to the host endoplasmic reticulum membrane. The enzyme catalyses [E2 ubiquitin-conjugating enzyme]-S-ubiquitinyl-L-cysteine + [acceptor protein]-L-cysteine = [E2 ubiquitin-conjugating enzyme]-L-cysteine + [acceptor protein]-S-ubiquitinyl-L-cysteine.. It participates in protein modification; protein ubiquitination. Its function is as follows. E3 ubiquitin-protein ligase that mediates ubiquitination of host surface class I (MHC-I) H-2D(b)/H2-D1 and H-2K(b)/H2-K1 molecules before they exit the endoplasmic reticulum, leading to their degradation by the endoplasmic reticulum-associated degradation (ERAD) system, thus blocking the immune detection of virus-infected cells. Mediates ubiquitination of lysine, as well as serine and threonine residues present in the cytoplasmic tail of surface class I molecules. Promotes ubiquitination of hydroxylated serine or threonine residues via ester bonds instead of the classical isopeptide linkage. The chain is E3 ubiquitin-protein ligase MIR1 (K3) from Murid herpesvirus 4 (MuHV-4).